Here is a 302-residue protein sequence, read N- to C-terminus: Cell division protein FtsQ (302 aa).

The segment at 1–41 (MPAVVRGGPPKPRRPRAEAPASPSKGKPAPRKAQPAAKLHA) is disordered. The Cytoplasmic segment spans residues 1–50 (MPAVVRGGPPKPRRPRAEAPASPSKGKPAPRKAQPAAKLHAARGVGLSPT). The span at 18–38 (EAPASPSKGKPAPRKAQPAAK) shows a compositional bias: low complexity. The helical transmembrane segment at 51–71 (VALSVAGAALGLGLVVMLATG) threads the bilayer. At 72-302 (HRAERLGASM…LPGQPAADGA (231 aa)) the chain is on the periplasmic side. The region spanning 94-162 (FRLKTVHIRG…DTVLIAVEER (69 aa)) is the POTRA domain.

The protein belongs to the FtsQ/DivIB family. FtsQ subfamily.

Its subcellular location is the cell inner membrane. Functionally, essential cell division protein. This chain is Cell division protein FtsQ, found in Caulobacter vibrioides (strain ATCC 19089 / CIP 103742 / CB 15) (Caulobacter crescentus).